The chain runs to 732 residues: Photosystem I P700 chlorophyll a apoprotein A1 (732 aa).

8 helical membrane passes run 61-84, 145-168, 185-209, 278-296, 317-340, 356-382, 414-436, and 510-528; these read VFSSGLAHFSIVFFWLGGMHFHGA, LKYAAAAALIGSIATLWAAYFHMH, NAGQLAILAGLGSISWAGHQIHIAL, IASHHFFVGITCIISGIIA, WHSRLSINLAIAGSLSITFAHHIY, LSLFVHHMWIGGFFIVGAGAHASIFMI, IIMGHLIYVTIALGMHAFGIYIH, and FMVHHIHAFTIHCTLLILM. [4Fe-4S] cluster is bound by residues C552 and C561. Transmembrane regions (helical) follow at residues 568-589 and 644-666; these read HVFLGVFWMYNSLSIVIFHFFW and LSGYGLIFLGAHFTWAFSLMFLW. Chlorophyll a' is bound at residue H655. Chlorophyll a is bound by residues M663 and Y671. W672 serves as a coordination point for phylloquinone. The helical transmembrane segment at 704 to 724 threads the bilayer; that stretch reads AVGLVHYMLGGIGTTWAFFLA.

It belongs to the PsaA/PsaB family. In terms of assembly, the PsaA/B heterodimer binds the P700 chlorophyll special pair and subsequent electron acceptors. PSI consists of a core antenna complex that captures photons, and an electron transfer chain that converts photonic excitation into a charge separation. The eukaryotic PSI reaction center is composed of at least 11 subunits. The cofactor is P700 is a chlorophyll a/chlorophyll a' dimer, A0 is one or more chlorophyll a, A1 is one or both phylloquinones and FX is a shared 4Fe-4S iron-sulfur center..

The protein localises to the plastid. Its subcellular location is the chloroplast thylakoid membrane. It catalyses the reaction reduced [plastocyanin] + hnu + oxidized [2Fe-2S]-[ferredoxin] = oxidized [plastocyanin] + reduced [2Fe-2S]-[ferredoxin]. PsaA and PsaB bind P700, the primary electron donor of photosystem I (PSI), as well as the electron acceptors A0, A1 and FX. PSI is a plastocyanin/cytochrome c6-ferredoxin oxidoreductase, converting photonic excitation into a charge separation, which transfers an electron from the donor P700 chlorophyll pair to the spectroscopically characterized acceptors A0, A1, FX, FA and FB in turn. Oxidized P700 is reduced on the lumenal side of the thylakoid membrane by plastocyanin or cytochrome c6. This Heterocapsa triquetra (Dinoflagellate) protein is Photosystem I P700 chlorophyll a apoprotein A1.